We begin with the raw amino-acid sequence, 204 residues long: Leucyl/phenylalanyl-tRNA--protein transferase (204 aa).

This sequence belongs to the L/F-transferase family.

It is found in the cytoplasm. The catalysed reaction is N-terminal L-lysyl-[protein] + L-leucyl-tRNA(Leu) = N-terminal L-leucyl-L-lysyl-[protein] + tRNA(Leu) + H(+). It catalyses the reaction N-terminal L-arginyl-[protein] + L-leucyl-tRNA(Leu) = N-terminal L-leucyl-L-arginyl-[protein] + tRNA(Leu) + H(+). The enzyme catalyses L-phenylalanyl-tRNA(Phe) + an N-terminal L-alpha-aminoacyl-[protein] = an N-terminal L-phenylalanyl-L-alpha-aminoacyl-[protein] + tRNA(Phe). Functions in the N-end rule pathway of protein degradation where it conjugates Leu, Phe and, less efficiently, Met from aminoacyl-tRNAs to the N-termini of proteins containing an N-terminal arginine or lysine. This Sinorhizobium medicae (strain WSM419) (Ensifer medicae) protein is Leucyl/phenylalanyl-tRNA--protein transferase.